The sequence spans 561 residues: Lanosterol 14-alpha demethylase (561 aa).

Residue Cys501 participates in heme binding.

It belongs to the cytochrome P450 family. It depends on heme as a cofactor.

The protein localises to the membrane. The enzyme catalyses a 14alpha-methyl steroid + 3 reduced [NADPH--hemoprotein reductase] + 3 O2 = a Delta(14) steroid + formate + 3 oxidized [NADPH--hemoprotein reductase] + 4 H2O + 4 H(+). The catalysed reaction is a 14alpha-methyl steroid + reduced [NADPH--hemoprotein reductase] + O2 = a 14alpha-hydroxymethyl steroid + oxidized [NADPH--hemoprotein reductase] + H2O + H(+). It carries out the reaction a 14alpha-hydroxymethyl steroid + reduced [NADPH--hemoprotein reductase] + O2 = a 14alpha-formyl steroid + oxidized [NADPH--hemoprotein reductase] + 2 H2O + H(+). It catalyses the reaction a 14alpha-formyl steroid + reduced [NADPH--hemoprotein reductase] + O2 = a Delta(14) steroid + formate + oxidized [NADPH--hemoprotein reductase] + H2O + 2 H(+). The enzyme catalyses lanosterol + 3 reduced [NADPH--hemoprotein reductase] + 3 O2 = 4,4-dimethyl-5alpha-cholesta-8,14,24-trien-3beta-ol + formate + 3 oxidized [NADPH--hemoprotein reductase] + 4 H2O + 4 H(+). The catalysed reaction is lanosterol + reduced [NADPH--hemoprotein reductase] + O2 = 32-hydroxylanosterol + oxidized [NADPH--hemoprotein reductase] + H2O + H(+). It carries out the reaction 32-hydroxylanosterol + reduced [NADPH--hemoprotein reductase] + O2 = 32-oxolanosterol + oxidized [NADPH--hemoprotein reductase] + 2 H2O + H(+). It catalyses the reaction 32-oxolanosterol + reduced [NADPH--hemoprotein reductase] + O2 = 4,4-dimethyl-5alpha-cholesta-8,14,24-trien-3beta-ol + formate + oxidized [NADPH--hemoprotein reductase] + H2O + 2 H(+). The enzyme catalyses eburicol + 3 reduced [NADPH--hemoprotein reductase] + 3 O2 = 14-demethyleburicol + formate + 3 oxidized [NADPH--hemoprotein reductase] + 4 H2O + 4 H(+). The catalysed reaction is eburicol + reduced [NADPH--hemoprotein reductase] + O2 = 32-hydroxyeburicol + oxidized [NADPH--hemoprotein reductase] + H2O + H(+). It carries out the reaction 32-hydroxyeburicol + reduced [NADPH--hemoprotein reductase] + O2 = 32-oxoeburicol + oxidized [NADPH--hemoprotein reductase] + 2 H2O + H(+). It catalyses the reaction 32-oxoeburicol + reduced [NADPH--hemoprotein reductase] + O2 = 14-demethyleburicol + formate + oxidized [NADPH--hemoprotein reductase] + H2O + 2 H(+). It functions in the pathway steroid biosynthesis; zymosterol biosynthesis; zymosterol from lanosterol: step 1/6. In terms of biological role, sterol 14alpha-demethylase that plays a critical role in the third module of ergosterol biosynthesis pathway, being ergosterol the major sterol component in fungal membranes that participates in a variety of functions. The third module or late pathway involves the ergosterol synthesis itself through consecutive reactions that mainly occur in the endoplasmic reticulum (ER) membrane. In filamentous fungi, during the initial step of this module, lanosterol (lanosta-8,24-dien-3beta-ol) can be metabolized to eburicol. Sterol 14alpha-demethylase catalyzes the three-step oxidative removal of the 14alpha-methyl group (C-32) of both these sterols in the form of formate, and converts eburicol and lanosterol to 14-demethyleburicol (4,4,24-trimethylergosta-8,14,24(28)-trienol) and 4,4-dimethyl-5alpha-cholesta-8,14,24-trien-3beta-ol, respectively, which are further metabolized by other enzymes in the pathway to ergosterol. Can also use substrates not intrinsic to fungi, such as 24,25-dihydrolanosterol (DHL), producing 4,4-dimethyl-8,14-cholestadien-3-beta-ol, but at lower rates than the endogenous substrates. The polypeptide is Lanosterol 14-alpha demethylase (ERG11) (Mycosarcoma maydis (Corn smut fungus)).